Reading from the N-terminus, the 712-residue chain is Polyphosphate kinase (712 aa).

Asparagine 49 contacts ATP. Arginine 398 and arginine 428 together coordinate Mg(2+). The Phosphohistidine intermediate role is filled by histidine 458. Positions 491, 587, and 615 each coordinate ATP.

The protein belongs to the polyphosphate kinase 1 (PPK1) family. The cofactor is Mg(2+). Post-translationally, an intermediate of this reaction is the autophosphorylated ppk in which a phosphate is covalently linked to a histidine residue through a N-P bond.

It catalyses the reaction [phosphate](n) + ATP = [phosphate](n+1) + ADP. Catalyzes the reversible transfer of the terminal phosphate of ATP to form a long-chain polyphosphate (polyP). The sequence is that of Polyphosphate kinase from Prochlorococcus marinus (strain MIT 9313).